The primary structure comprises 786 residues: MVIVKKVILNNVKTHSKREFDFEKGINLILGPNGSGKTTLVESIFLALFGGDFARVIDYFKKGEKTMAITLILEDKGKTYRIRRKWVLENNAKLVESSLELIDTIPKKLASDHNKLLQQIKHLFGLDKKIIPLIYYKQNEITKIIEMDPRKRKEWFDEILGIKDLEEFSEKLKMAIKLIKTGKISRIEDRIKLLKAELNKKSLLENKLKNYKEKLVLLSNELENLEKEYKILENQYKEYLELKAKLKSIEGQINNINVKEIESKINNIREELNNIEELTDYEKDILSKKHEIIRCNEIKNRLKELEKEIKDYDKIKKEFLEIESKYKQYEEKRLEYEKAKMLEKEKEKAKREYSYLLKEKESLEKEIAELQNKINQIKELEKMEQELLEIQERIGVIKAKLKLLENIKDRCPLCGAKLSSDTIEHLQKEREKLQKEYYYLKEKYNQLLIKIRALEKYKGLEKVLEAKTKHLETIENRLKEIKPIIELEIPKIELDESIPYKYKQLLNKVSYLEAKIKEYERYKNIECPYDIAIEELKRIEDKYNKYIKKPALERELNLLLKELERYNSLLKEKEEILSKLNPEIETKYKELTKKKENLLSEISKVKGIIKEIESQIKEIEKHESTIKQLEEKKRKWEKLVEKLNRIVKALGRDGIPKALREGAINYINDMANIYLREFTDKYKLKVNNDLSIYAIPIDNPHYEIEAKNLSGGEKVVFSLSIALAIISWLSLQNMFMVLDEPTANLDNERTLALRKTFDKLEKMVEQAIIVTHNELLDTGENHVVRL.

ATP contacts are provided by residues Lys-13, 33 to 39, and Gln-138; that span reads NGSGKTT. Coiled-coil stretches lie at residues 194-249, 337-455, and 551-650; these read LKAE…LKSI, EKAK…RALE, and ALER…VKAL. The 94-residue stretch at 366 to 459 folds into the Zinc-hook domain; that stretch reads EIAELQNKIN…KIRALEKYKG (94 aa). Residues Cys-411 and Cys-414 each coordinate Zn(2+).

It belongs to the SMC family. RAD50 subfamily. Homodimer. Forms a heterotetramer composed of two Mre11 subunits and two Rad50 subunits. Zn(2+) serves as cofactor.

In terms of biological role, part of the Rad50/Mre11 complex, which is involved in the early steps of DNA double-strand break (DSB) repair. The complex may facilitate opening of the processed DNA ends to aid in the recruitment of HerA and NurA. Rad50 controls the balance between DNA end bridging and DNA resection via ATP-dependent structural rearrangements of the Rad50/Mre11 complex. The chain is DNA double-strand break repair Rad50 ATPase from Nanoarchaeum equitans (strain Kin4-M).